The primary structure comprises 247 residues: Acidic 27 kDa endochitinase (247 aa).

The signal sequence occupies residues 1 to 16; sequence MVLCCVFLLFLTGSFA. Catalysis depends on Glu-84, which acts as the Proton donor. Cys-206 and Cys-238 are oxidised to a cystine.

The protein belongs to the glycosyl hydrolase 19 family. Chitinase class II subfamily.

Its subcellular location is the secreted. It is found in the extracellular space. It carries out the reaction Random endo-hydrolysis of N-acetyl-beta-D-glucosaminide (1-&gt;4)-beta-linkages in chitin and chitodextrins.. Its function is as follows. Defense against chitin-containing fungal pathogens. The protein is Acidic 27 kDa endochitinase (CHI17) of Solanum lycopersicum (Tomato).